The primary structure comprises 331 residues: Ketol-acid reductoisomerase (NADP(+)) (331 aa).

The KARI N-terminal Rossmann domain occupies 2 to 182 (AQLFYDSDAD…GGTRAGILET (181 aa)). NADP(+) contacts are provided by residues 25-28 (YGSQ), S51, S53, and 83-86 (DEFQ). Residue H108 is part of the active site. Position 134 (G134) interacts with NADP(+). The KARI C-terminal knotted domain occupies 183 to 328 (NFKEETETDL…KGLRAMFSWL (146 aa)). 4 residues coordinate Mg(2+): D191, E195, E227, and E231. S252 contacts substrate.

Belongs to the ketol-acid reductoisomerase family. It depends on Mg(2+) as a cofactor.

The enzyme catalyses (2R)-2,3-dihydroxy-3-methylbutanoate + NADP(+) = (2S)-2-acetolactate + NADPH + H(+). It carries out the reaction (2R,3R)-2,3-dihydroxy-3-methylpentanoate + NADP(+) = (S)-2-ethyl-2-hydroxy-3-oxobutanoate + NADPH + H(+). It functions in the pathway amino-acid biosynthesis; L-isoleucine biosynthesis; L-isoleucine from 2-oxobutanoate: step 2/4. It participates in amino-acid biosynthesis; L-valine biosynthesis; L-valine from pyruvate: step 2/4. Functionally, involved in the biosynthesis of branched-chain amino acids (BCAA). Catalyzes an alkyl-migration followed by a ketol-acid reduction of (S)-2-acetolactate (S2AL) to yield (R)-2,3-dihydroxy-isovalerate. In the isomerase reaction, S2AL is rearranged via a Mg-dependent methyl migration to produce 3-hydroxy-3-methyl-2-ketobutyrate (HMKB). In the reductase reaction, this 2-ketoacid undergoes a metal-dependent reduction by NADPH to yield (R)-2,3-dihydroxy-isovalerate. This is Ketol-acid reductoisomerase (NADP(+)) from Prochlorococcus marinus (strain MIT 9303).